We begin with the raw amino-acid sequence, 124 residues long: Ribonuclease pancreatic (124 aa).

The segment covering 1–13 has biased composition (basic and acidic residues); sequence KESAAAKFERQHM. The segment at 1-24 is disordered; that stretch reads KESAAAKFERQHMDSSTSSASSSN. 2 residues coordinate substrate: Lys-7 and Arg-10. His-12 (proton acceptor) is an active-site residue. 4 disulfides stabilise this stretch: Cys-26–Cys-84, Cys-40–Cys-95, Cys-58–Cys-110, and Cys-65–Cys-72. An N-linked (GlcNAc...) asparagine; partial glycan is attached at Asn-34. Residues 41–45, Lys-66, and Arg-85 contribute to the substrate site; that span reads KPVNT. His-119 acts as the Proton donor in catalysis.

This sequence belongs to the pancreatic ribonuclease family. As to quaternary structure, monomer. Interacts with and forms tight 1:1 complexes with RNH1. Dimerization of two such complexes may occur. Interaction with RNH1 inhibits this protein. Pancreas.

The protein localises to the secreted. It carries out the reaction an [RNA] containing cytidine + H2O = an [RNA]-3'-cytidine-3'-phosphate + a 5'-hydroxy-ribonucleotide-3'-[RNA].. The catalysed reaction is an [RNA] containing uridine + H2O = an [RNA]-3'-uridine-3'-phosphate + a 5'-hydroxy-ribonucleotide-3'-[RNA].. Functionally, endonuclease that catalyzes the cleavage of RNA on the 3' side of pyrimidine nucleotides. Acts on single-stranded and double-stranded RNA. This Aepyceros melampus (Impala) protein is Ribonuclease pancreatic (RNASE1).